Consider the following 170-residue polypeptide: Calcineurin subunit B type 2 (170 aa).

4 EF-hand domains span residues 18 to 46, 50 to 85, 87 to 122, and 128 to 163; these read DEIRRLGKRFRKLDLDNSGALSVDEFMSL, QQNPLVQRVIDIFDADGNGEVDFKEFIQGVSQFSVK, DKLSKLRFAFRIYDMDNDGYISNGELFQVLKMMVGN, and QLQQIVDKTIGFADKDEDGKISFDEFCSVVGNTDIH. Ca(2+) contacts are provided by Asp-31, Asp-33, Ser-35, Glu-42, Asp-63, Asp-65, Asn-67, Glu-69, Glu-74, Asp-100, Asp-102, Asp-104, Tyr-106, Glu-111, Asp-141, Asp-143, Asp-145, Lys-147, and Glu-152. A Phosphoserine modification is found at Ser-35.

This sequence belongs to the calcineurin regulatory subunit family. In terms of assembly, composed of a catalytic subunit (A) and a regulatory subunit (B). Interacts with sra.

Its function is as follows. Calcineurin is a calcium-binding and calmodulin-binding protein found in all cells from yeast to mammals, and a calcium-dependent, calmodulin-stimulated protein phosphatase. The polypeptide is Calcineurin subunit B type 2 (CanB2) (Drosophila melanogaster (Fruit fly)).